Consider the following 1136-residue polypeptide: Unconventional myosin-Ib (1136 aa).

In terms of domain architecture, Myosin motor spans 15–701 (IGVGDMVLLE…TLFKLEDLRK (687 aa)). Ser60 carries the post-translational modification Phosphoserine. 108–115 (GESGAGKT) is an ATP binding site. Lys287 is covalently cross-linked (Glycyl lysine isopeptide (Lys-Gly) (interchain with G-Cter in SUMO1); alternate). Residue Lys287 forms a Glycyl lysine isopeptide (Lys-Gly) (interchain with G-Cter in SUMO2); alternate linkage. Positions 578–600 (VATLMKNLQTKNPNYIRCIKPND) are actin-binding. 6 consecutive IQ domains span residues 704–733 (LEDLATLIQKIYRGWKCRTHFLLMKKSQIV), 728–748 (KKSQIVIAAWYRRYAQQKRYQ), 750–779 (TKSSALVIQSYIRGWKARKILRELKHQKRC), 779–808 (CKEAVTTIAAYWHGTQARRELRRLKEEARN), 808–837 (NKHAIAVIWAYWLGSKARRELKRLKEEARR), and 837–866 (RKHAVAVIWAYWLGLKVRREYRKFFRANAG). A TH1 domain is found at 952–1136 (KALYPSSVGQ…NNRLLEVAVP (185 aa)).

The protein belongs to the TRAFAC class myosin-kinesin ATPase superfamily. Myosin family.

Its function is as follows. Motor protein that may participate in process critical to neuronal development and function such as cell migration, neurite outgrowth and vesicular transport. The polypeptide is Unconventional myosin-Ib (MYO1B) (Homo sapiens (Human)).